Consider the following 86-residue polypeptide: Mu-theraphotoxin-Hhn1d (86 aa).

Positions 1–21 (MKASMFLALAGLALLFVVCYA) are cleaved as a signal peptide. Positions 22 to 49 (SESEEKEFSNELLSSVLAVDDNSKGEER) are excised as a propeptide. 3 disulfides stabilise this stretch: Cys-51–Cys-66, Cys-58–Cys-73, and Cys-65–Cys-80. Ile-84 is modified (isoleucine amide).

The protein belongs to the neurotoxin 10 (Hwtx-1) family. 22 (Htx-4) subfamily. In terms of assembly, monomer. In terms of tissue distribution, expressed by the venom gland.

The protein resides in the secreted. Neurotoxin. Selectively blocks neuronal tetrodotoxin-sensitive voltage-gated sodium channels (Nav). Does not affect tetrodotoxin-resistant voltage-gated sodium channels or calcium channels. The protein is Mu-theraphotoxin-Hhn1d of Cyriopagopus hainanus (Chinese bird spider).